We begin with the raw amino-acid sequence, 1132 residues long: Serine/threonine-protein kinase spk-1 (1132 aa).

Residues 75–95 (GGSLILTDIFPTVLFMFVVLF) traverse the membrane as a helical segment. Disordered regions lie at residues 240–388 (NEDQ…DSDD) and 419–481 (NKKA…KRGG). 2 stretches are compositionally biased toward acidic residues: residues 281 to 290 (SEDEDVESQE) and 311 to 336 (DEPIEEELASCHSDEDDHQNEVLGDE). A compositionally biased stretch (low complexity) spans 362–372 (DSSVSSSTSST). Over residues 373–388 (PDDDEDDSATSYDSDD) the composition is skewed to acidic residues. Basic and acidic residues predominate over residues 421-433 (KAEVNANEERMDD). Low complexity predominate over residues 434 to 443 (VSVSPGRSDS). In terms of domain architecture, Protein kinase spans 495-1044 (YHVIRKLGWG…ANDALKHPFL (550 aa)). ATP contacts are provided by residues 501-509 (LGWGHFSTV) and Lys524. Catalysis depends on Asp628, which acts as the Proton acceptor. A disordered region spans residues 1066–1121 (QVPEALDGNQEVYRDENDSNSASERSANRSAGSDDEEEFHMDRPGPSGVINEPADV). A compositionally biased stretch (low complexity) spans 1084–1096 (SNSASERSANRSA).

The protein belongs to the protein kinase superfamily. Ser/Thr protein kinase family.

It localises to the membrane. The catalysed reaction is L-seryl-[protein] + ATP = O-phospho-L-seryl-[protein] + ADP + H(+). The enzyme catalyses L-threonyl-[protein] + ATP = O-phospho-L-threonyl-[protein] + ADP + H(+). In terms of biological role, required for embryogenesis and germline development in both adult hermaphrodites and males. SR-protein kinase (SRPK) that binds directly to and phosphorylates RS domains. This Caenorhabditis briggsae protein is Serine/threonine-protein kinase spk-1 (spk-1).